Reading from the N-terminus, the 1981-residue chain is Nonribosomal peptide synthetase rstn8 (1981 aa).

The adenylation stretch occupies residues 251–638 (SYAALEQESA…ELGEIEYQAS (388 aa)). The Carrier 1 domain maps to 763–840 (HHAGQKYDEM…ELFHRSQKTP (78 aa)). Ser-800 bears the O-(pantetheine 4'-phosphoryl)serine mark. The interval 883 to 1293 (EDIYPCSPLQ…DASMGTILSQ (411 aa)) is condensation 1. The 77-residue stretch at 1438–1514 (EPLLPLEATL…CLASTLNSRP (77 aa)) folds into the Carrier 2 domain. Ser-1475 is subject to O-(pantetheine 4'-phosphoryl)serine. The tract at residues 1586-1978 (EEQIDLVSFA…TFAQSIERII (393 aa)) is condensation 1. The disordered stretch occupies residues 1754–1774 (HHHHQHEGRQHHGASETNGNR).

This sequence belongs to the NRP synthetase family. Pantetheine 4'-phosphate is required as a cofactor.

It catalyses the reaction 2 L-tryptophan = cyclo(L-Trp-L-Trp) + 2 H2O. It functions in the pathway alkaloid biosynthesis. In terms of biological role, nonribosomal peptide synthetase; part of the gene cluster that mediates the biosynthesis of okaramine B, a prenylated indole alkaloid that possesses an unusual octacyclic ring system, including a four-membered azetidine ring and an eight-membered azocine ring, and that exhibits insecticidal activity against silkworm larvae. Within the pathway, okaA acts as a bimodular non-ribosomal peptide synthetase (NRPS) that condenses two tryptophan molecules into cyclo(L-Trp-L-Trp). Prenylation by the prenyltransferase okaC then leads to the formation of cyclo(N8-(alpha,alpha-dimethylallyl)-L-Trp-6a-(alpha,alpha-dime-thylallyl)-L-Trp). This is followed by indole 2,3-epoxidation by the FAD-dependent monooxygenase okaB to facilitate the formation of the hexahydropyrrolo[2,3-b]indole (HPI) moiety of okaramine C. The cytochrome P450 monooxygenase okaD then likely catalyzes formation of the eight-membered ring of okaramine A. The dioxygenase okaE further forms the unusual 2-dimethyl-3-methyl-azetidine ring to yield 12-deshydroxyl okaramine E, as well as the hydroxylation of 12-deshydroxyl okaramine E to produce okaramine E. The cytochrome P450 monoxygenase okaG converts 12-deshydroxyl okaramine E into 3-desmethyl okaramine B which is further methylated by the methyltransferase okaF into okaramine B. In a shunt pathway, okaG and okaF together are also able to convert okaramine E into okaramine D. Okaramine H is produced by nonenzymatic conversion from okaramine A. The chain is Nonribosomal peptide synthetase rstn8 from Penicillium ochrochloron.